The chain runs to 425 residues: UPF0597 protein VSAL_I0741 (425 aa).

The protein belongs to the UPF0597 family.

This is UPF0597 protein VSAL_I0741 from Aliivibrio salmonicida (strain LFI1238) (Vibrio salmonicida (strain LFI1238)).